A 328-amino-acid polypeptide reads, in one-letter code: Dof zinc finger protein PBF (328 aa).

The disordered stretch occupies residues 33–56 (RDPKQTRAMPQIGGSGERKPRPQL). The Dof-type zinc finger occupies 60–114 (LKCPRCDSNNTKFCYYNNYSMSQPRYFCKACRRYWTHGGTLRNVPIGGGCRKNKH). Zn(2+) contacts are provided by Cys62, Cys65, Cys87, and Cys90. 2 disordered regions span residues 124 to 144 (TSSS…ASSS) and 306 to 328 (WNKH…NKGQ).

Interacts with the bZIP transcription factor Opaque-2/O2. As to expression, seed endosperm.

It is found in the nucleus. Transcription factor that binds specifically to a 5'-AA[AG]G-3' consensus core sequence. May enhance the DNA binding of the bZIP transcription factor Opaque-2 to O2 binding site elements. The sequence is that of Dof zinc finger protein PBF (PBF) from Zea mays (Maize).